A 148-amino-acid chain; its full sequence is Fibroblast growth factor 1 (148 aa).

Positions 1 to 11 are excised as a propeptide; it reads EITTFAALTER. Position 29 (Asn29) interacts with heparin. A heparin-binding region spans residues 123–139; that stretch reads KKNGKTKLGSRTHFGQK.

Belongs to the heparin-binding growth factors family.

It is found in the secreted. It localises to the cytoplasm. Its subcellular location is the cell cortex. The protein localises to the cytosol. The protein resides in the nucleus. Its function is as follows. Plays an important role in the regulation of cell survival, cell division, angiogenesis, cell differentiation and cell migration. Functions as a potent mitogen in vitro. Acts as a ligand for FGFR1 and integrins. Binds to FGFR1 in the presence of heparin leading to FGFR1 dimerization and activation via sequential autophosphorylation on tyrosine residues which act as docking sites for interacting proteins, leading to the activation of several signaling cascades. Binds to integrins. Its binding to integrins and subsequent ternary complex formation with integrins and FGFR1 are essential for FGF1 signaling. The chain is Fibroblast growth factor 1 (fgf1) from Cynops pyrrhogaster (Japanese fire-bellied newt).